The chain runs to 373 residues: CASP-like protein UU6 (373 aa).

Disordered stretches follow at residues methionine 1 to glycine 100 and threonine 172 to lysine 195. Residues methionine 1–alanine 204 are Cytoplasmic-facing. Residues lysine 56–threonine 74 are compositionally biased toward polar residues. Residues isoleucine 205–valine 225 form a helical membrane-spanning segment. The Extracellular portion of the chain corresponds to valine 226 to arginine 253. A helical membrane pass occupies residues tyrosine 254 to leucine 274. Over tyrosine 275–threonine 276 the chain is Cytoplasmic. A helical membrane pass occupies residues valine 277 to phenylalanine 297. Over aspartate 298–aspartate 342 the chain is Extracellular. The N-linked (GlcNAc...) asparagine glycan is linked to asparagine 317. Residues valine 343–isoleucine 363 traverse the membrane as a helical segment. The Cytoplasmic portion of the chain corresponds to tyrosine 364–tyrosine 373.

This sequence belongs to the Casparian strip membrane proteins (CASP) family. In terms of assembly, homodimer and heterodimers.

It localises to the cell membrane. The chain is CASP-like protein UU6 from Physcomitrium patens (Spreading-leaved earth moss).